Reading from the N-terminus, the 302-residue chain is Tyrosine recombinase XerC (302 aa).

In terms of domain architecture, Core-binding (CB) spans 2–89 (QPLMEQIRAF…AIRSFYRHLL (88 aa)). The Tyr recombinase domain maps to 110–289 (RLPFHLDIDQ…SLDRLMEVYD (180 aa)). Catalysis depends on residues R150, K174, H241, R244, and H267. Catalysis depends on Y276, which acts as the O-(3'-phospho-DNA)-tyrosine intermediate.

Belongs to the 'phage' integrase family. XerC subfamily. Forms a cyclic heterotetrameric complex composed of two molecules of XerC and two molecules of XerD.

Its subcellular location is the cytoplasm. Its function is as follows. Site-specific tyrosine recombinase, which acts by catalyzing the cutting and rejoining of the recombining DNA molecules. The XerC-XerD complex is essential to convert dimers of the bacterial chromosome into monomers to permit their segregation at cell division. It also contributes to the segregational stability of plasmids. The sequence is that of Tyrosine recombinase XerC from Pelobacter propionicus (strain DSM 2379 / NBRC 103807 / OttBd1).